Here is a 318-residue protein sequence, read N- to C-terminus: uncharacterized protein (318 aa).

This is an uncharacterized protein from Escherichia coli (strain K12).